The sequence spans 197 residues: Dehydrin DHN1 (197 aa).

Residues 1-14 show a composition bias toward polar residues; it reads MSQYQNQYGAQTGM. Disordered stretches follow at residues 1–86 and 133–197; these read MSQY…GTNP and GTEQ…CTGH. 2 tandem repeats follow at residues 16–21 and 26–31. A 2 X approximate repeats region spans residues 16–31; the sequence is DEYGNPVNQVDQYGNP. Over residues 74-83 the composition is skewed to gly residues; the sequence is THTGGVGGYG. The stretch at 126-133 is one 2-1 repeat; the sequence is KIKEKIPG. Residues 126 to 190 are 2 X approximate repeats; the sequence is KIKEKIPGTE…MDKIKEKLPG (65 aa). Positions 144 to 160 are enriched in gly residues; sequence AGYGSTGYGASGGGIGN. Basic and acidic residues predominate over residues 165–188; the sequence is YVREEHRVDHGEKKGIMDKIKEKL. One copy of the 2-2 repeat lies at 183 to 190; it reads KIKEKLPG.

The protein belongs to the plant dehydrin family. In terms of tissue distribution, shoots, roots, and cotyledon from dehydrating seedlings.

This is Dehydrin DHN1 (DHN1) from Pisum sativum (Garden pea).